The sequence spans 603 residues: MQGTLTSRNTAINNVPSSGVQQSGNNLSGGRFVPNNLPSALSQIPQGNSHGHSGMTSRGGTSVVGNPGYSSNTNGVGGSIPGILPTFAAIGNRSSVPGLGVSPILGNAGPRMTNSVGNIVGGGNIGRSISSGAGLSVPGLASRLNMNANSGSGNLNVQGPNRLMSGVLQQASPQVLSMLGNSYPAGGPLSQNHVQAIGNFNSMGLLNDVNSNDGSPFDINDFPQLSSRPSSAGGPQGQLGSLRKQGLSPIVQQNQEFSIQNEDFPALPGFKGGNADYAMDPHQKEQLHDNTLSMMQQQHFSMGRSAGFNLGGTYSSNRPQQQLQHAPSVSSGGVSFSNINNQDLLSLHGSDVFQSSHSSYQQQGGGPPGIGLRPLNSSGTVSGIGSYDQLIQQYQQHQGQSQFRLQQMSTLGQPFRDQSLKSMQSQVAPDPFGMLGLLSVIRMSDPDLTSLALGIDLTTLGLNLNSAENLYKTFGSPWSDEPAKGDPEFTVPQCYYAKQPPPLNQAYFSKFQLDTLFYIFYSMPKDEAQLYAANELYNRGWFYHREHRLWFMRVANMEPLVKTNAYERGSYICFDPNTWETIHKDNFVLHCEMLEKRPVLPQH.

Composition is skewed to polar residues over residues 1–28 (MQGT…NNLS) and 36–70 (NLPS…PGYS). 4 disordered regions span residues 1–70 (MQGT…PGYS), 212–242 (NDGS…LGSL), 306–335 (AGFN…GGVS), and 355–377 (SSHS…PLNS). Positions 312 to 335 (GTYSSNRPQQQLQHAPSVSSGGVS) are enriched in polar residues.

It belongs to the CNOT2/3/5 family. As to quaternary structure, binds to VIP1. Interacts with Agrobacterium tumefaciens VirE2. Forms a complex made of Agrobacterium VirE2, VIP1, VIP2 and single-stranded DNA (ssDNA).

It localises to the nucleus. In terms of biological role, transcriptional regulator required for Agrobacterium-mediated stable genetic transformation by T-DNA integration in host genome, but not for T-DNA transient expression. The protein is Probable NOT transcription complex subunit VIP2 (VIP2) of Nicotiana benthamiana.